Here is a 175-residue protein sequence, read N- to C-terminus: NADH-ubiquinone oxidoreductase chain 6 (175 aa).

6 helical membrane passes run 1–21 (MMAYIGFILSIMFVISFVGFS), 25–45 (SPIYGGLVLIMSGGFGCGIVM), 47–67 (FGGSFLGLMVFLIYLGGMLVV), 87–107 (AAVLGAFVLGVLMEVVLVLYV), 116–136 (VFNFSGVGDWAVSDNGGFGVF), and 149–169 (YGVWIIIVTGWSLFVGVLVIL).

The protein belongs to the complex I subunit 6 family. As to quaternary structure, core subunit of respiratory chain NADH dehydrogenase (Complex I) which is composed of 45 different subunits.

The protein resides in the mitochondrion inner membrane. It carries out the reaction a ubiquinone + NADH + 5 H(+)(in) = a ubiquinol + NAD(+) + 4 H(+)(out). In terms of biological role, core subunit of the mitochondrial membrane respiratory chain NADH dehydrogenase (Complex I) which catalyzes electron transfer from NADH through the respiratory chain, using ubiquinone as an electron acceptor. Essential for the catalytic activity and assembly of complex I. The chain is NADH-ubiquinone oxidoreductase chain 6 (MT-ND6) from Ceratotherium simum (White rhinoceros).